The following is a 190-amino-acid chain: dCTP deaminase (190 aa).

107 to 112 (KSTYAR) contributes to the dCTP binding site. Catalysis depends on Glu-133, which acts as the Proton donor/acceptor. Positions 152, 166, and 176 each coordinate dCTP.

This sequence belongs to the dCTP deaminase family. Homotrimer.

It catalyses the reaction dCTP + H2O + H(+) = dUTP + NH4(+). The protein operates within pyrimidine metabolism; dUMP biosynthesis; dUMP from dCTP (dUTP route): step 1/2. In terms of biological role, catalyzes the deamination of dCTP to dUTP. The sequence is that of dCTP deaminase from Campylobacter hominis (strain ATCC BAA-381 / DSM 21671 / CCUG 45161 / LMG 19568 / NCTC 13146 / CH001A).